The following is a 791-amino-acid chain: Metabotropic glutamate receptor-like protein D (791 aa).

The signal sequence occupies residues 1–22 (MKINSFLIILILLFISIKNSNG). Over 23–390 (EPEKKFKLIT…TEVYQSRPIQ (368 aa)) the chain is Extracellular. N-linked (GlcNAc...) asparagine glycans are attached at residues N72, N168, N279, N290, N306, and N349. The chain crosses the membrane as a helical span at residues 391–411 (IAISSISSFFIVTVLVMMGLV). Over 412 to 424 (VRFRKNPSIRSAS) the chain is Cytoplasmic. Residues 425–445 (PIFLNFILFGALIIYVGIIIW) form a helical membrane-spanning segment. The Extracellular portion of the chain corresponds to 446–453 (SSSINSAS). A helical transmembrane segment spans residues 454–474 (CNAQFWLVTLGFTTLIGSLVV). The Cytoplasmic segment spans residues 475–495 (KNVRIWLIFDNPELKLVKITN). A helical transmembrane segment spans residues 496 to 516 (LQLVPWVGVCLVINIILMSIL). Residues 517–550 (TSVGDLREVNAQGIDSLGKYEFMRICKMNSSGAS) are Extracellular-facing. The N-linked (GlcNAc...) asparagine glycan is linked to N545. The helical transmembrane segment at 551-571 (TLYTILAYFAALLLIGVFVSW) threads the bilayer. Over 572-585 (KIRIVDILEFNESK) the chain is Cytoplasmic. Residues 586 to 606 (AIANTLYAISFCLFVIVPLMI) traverse the membrane as a helical segment. Over 607–615 (SPQDKQSEK) the chain is Extracellular. Residues 616 to 636 (IILCIAGLFIVTAAVLIIFVP) form a helical membrane-spanning segment. Over 637–791 (KFYRVYIFGS…KNEENNDGDN (155 aa)) the chain is Cytoplasmic. Disordered regions lie at residues 664–715 (TARA…SEPN) and 746–791 (IITE…DGDN). Gly residues predominate over residues 674–689 (SSGGGAGSGGATGGSG). Residues 749-760 (ENGQDSNNNNNN) are compositionally biased toward low complexity. Residues 752 to 781 (QDSNNNNNNEENKDNNIENNKISEEIKENL) are a coiled coil. Residues 761–785 (EENKDNNIENNKISEEIKENLKNEE) show a composition bias toward basic and acidic residues.

It in the N-terminal section; belongs to the BMP lipoprotein family. In the C-terminal section; belongs to the G-protein coupled receptor 3 family. GABA-B receptor subfamily.

The protein resides in the membrane. The polypeptide is Metabotropic glutamate receptor-like protein D (grlD) (Dictyostelium discoideum (Social amoeba)).